We begin with the raw amino-acid sequence, 82 residues long: UPF0298 protein SMU_1670c (82 aa).

Belongs to the UPF0298 family.

The protein localises to the cytoplasm. The chain is UPF0298 protein SMU_1670c from Streptococcus mutans serotype c (strain ATCC 700610 / UA159).